The primary structure comprises 392 residues: GTPase Obg (392 aa).

An Obg domain is found at methionine 1–leucine 159. The disordered stretch occupies residues asparagine 127–aspartate 148. The span at arginine 129 to methionine 143 shows a compositional bias: polar residues. In terms of domain architecture, OBG-type G spans alanine 160–isoleucine 333. Residues glycine 166–serine 173, phenylalanine 191–valine 195, aspartate 213–glycine 216, asparagine 283–aspartate 286, and serine 314–alanine 316 each bind GTP. Residues serine 173 and threonine 193 each coordinate Mg(2+). A compositionally biased stretch (acidic residues) spans glutamate 363–valine 386. The disordered stretch occupies residues glutamate 363 to arginine 392.

Belongs to the TRAFAC class OBG-HflX-like GTPase superfamily. OBG GTPase family. Monomer. Requires Mg(2+) as cofactor.

The protein resides in the cytoplasm. An essential GTPase which binds GTP, GDP and possibly (p)ppGpp with moderate affinity, with high nucleotide exchange rates and a fairly low GTP hydrolysis rate. Plays a role in control of the cell cycle, stress response, ribosome biogenesis and in those bacteria that undergo differentiation, in morphogenesis control. The chain is GTPase Obg from Enterobacter sp. (strain 638).